The following is a 130-amino-acid chain: Small ribosomal subunit protein uS9 (130 aa).

The protein belongs to the universal ribosomal protein uS9 family.

The chain is Small ribosomal subunit protein uS9 from Ralstonia nicotianae (strain ATCC BAA-1114 / GMI1000) (Ralstonia solanacearum).